We begin with the raw amino-acid sequence, 56 residues long: Small ribosomal subunit protein uS14z/uS14y/uS14x (56 aa).

The Zn(2+) site is built by Cys-21, Cys-24, Cys-39, and Cys-42.

Belongs to the universal ribosomal protein uS14 family. The cofactor is Zn(2+).

This chain is Small ribosomal subunit protein uS14z/uS14y/uS14x (RPS29A), found in Arabidopsis thaliana (Mouse-ear cress).